The following is a 138-amino-acid chain: Cysteine desulfuration protein SufE (138 aa).

Cysteine 51 acts as the Cysteine persulfide intermediate in catalysis.

Belongs to the SufE family. In terms of assembly, homodimer. Interacts with SufS.

The protein localises to the cytoplasm. It functions in the pathway cofactor biosynthesis; iron-sulfur cluster biosynthesis. In terms of biological role, participates in cysteine desulfuration mediated by SufS. Cysteine desulfuration mobilizes sulfur from L-cysteine to yield L-alanine and constitutes an essential step in sulfur metabolism for biosynthesis of a variety of sulfur-containing biomolecules. Functions as a sulfur acceptor for SufS, by mediating the direct transfer of the sulfur atom from the S-sulfanylcysteine of SufS, an intermediate product of cysteine desulfuration process. This Shigella flexneri serotype 5b (strain 8401) protein is Cysteine desulfuration protein SufE.